Reading from the N-terminus, the 384-residue chain is Putative glutamate--cysteine ligase 2 (384 aa).

This sequence belongs to the glutamate--cysteine ligase type 2 family. YbdK subfamily.

The catalysed reaction is L-cysteine + L-glutamate + ATP = gamma-L-glutamyl-L-cysteine + ADP + phosphate + H(+). Its function is as follows. ATP-dependent carboxylate-amine ligase which exhibits weak glutamate--cysteine ligase activity. This is Putative glutamate--cysteine ligase 2 from Dechloromonas aromatica (strain RCB).